A 116-amino-acid chain; its full sequence is Large ribosomal subunit protein bL20 (116 aa).

Belongs to the bacterial ribosomal protein bL20 family.

Binds directly to 23S ribosomal RNA and is necessary for the in vitro assembly process of the 50S ribosomal subunit. It is not involved in the protein synthesizing functions of that subunit. This chain is Large ribosomal subunit protein bL20, found in Desulfosudis oleivorans (strain DSM 6200 / JCM 39069 / Hxd3) (Desulfococcus oleovorans).